A 136-amino-acid polypeptide reads, in one-letter code: uncharacterized protein (136 aa).

Positions 1–19 (MMTAAKRLGLYSALRACSA) are cleaved as a signal peptide. A helical transmembrane segment spans residues 75 to 97 (FWFSHTCLVFGSNTILFASLNSF).

The protein resides in the membrane. This is an uncharacterized protein from Saccharomyces cerevisiae (strain ATCC 204508 / S288c) (Baker's yeast).